The following is a 492-amino-acid chain: Cobyric acid synthase (492 aa).

The GATase cobBQ-type domain maps to 259–453 (HTTVAVVAYP…LHGLFEDAVA (195 aa)). Cysteine 340 serves as the catalytic Nucleophile. Residue histidine 445 is part of the active site.

It belongs to the CobB/CobQ family. CobQ subfamily.

Its pathway is cofactor biosynthesis; adenosylcobalamin biosynthesis. Functionally, catalyzes amidations at positions B, D, E, and G on adenosylcobyrinic A,C-diamide. NH(2) groups are provided by glutamine, and one molecule of ATP is hydrogenolyzed for each amidation. The polypeptide is Cobyric acid synthase (Paracidovorax citrulli (strain AAC00-1) (Acidovorax citrulli)).